The sequence spans 197 residues: dITP/XTP pyrophosphatase (197 aa).

8-13 (TGNVGK) serves as a coordination point for substrate. Positions 40 and 69 each coordinate Mg(2+). Catalysis depends on aspartate 69, which acts as the Proton acceptor. Residues serine 70, 154 to 157 (FGYD), lysine 177, and 182 to 183 (HR) contribute to the substrate site.

The protein belongs to the HAM1 NTPase family. In terms of assembly, homodimer. It depends on Mg(2+) as a cofactor. Mn(2+) serves as cofactor. The cofactor is Ni(2+).

The enzyme catalyses XTP + H2O = XMP + diphosphate + H(+). It catalyses the reaction dITP + H2O = dIMP + diphosphate + H(+). The catalysed reaction is ITP + H2O = IMP + diphosphate + H(+). Pyrophosphatase that catalyzes the hydrolysis of nucleoside triphosphates to their monophosphate derivatives, with a high preference for the non-canonical purine nucleotides XTP (xanthosine triphosphate), dITP (deoxyinosine triphosphate) and ITP. Can also efficiently hydrolyze 2'-deoxy-N-6-hydroxylaminopurine triphosphate (dHAPTP). Seems to function as a house-cleaning enzyme that removes non-canonical purine nucleotides from the nucleotide pool, thus preventing their incorporation into DNA/RNA and avoiding chromosomal lesions. To a much lesser extent, is also able to hydrolyze GTP, dGTP and dUTP, but shows very low activity toward the canonical nucleotides dATP, dCTP and dTTP and toward 8-oxo-dGTP, purine deoxyribose triphosphate, 2-aminopurine deoxyribose triphosphate and 2,6-diaminopurine deoxyribose triphosphate. Its function is as follows. Genetic interactions among priB, dam, lexA, nagC, polA, rdgB, rdgB, rep and uup link the PriA-PriB replication restart pathway to DNA double-strand break repair. In Escherichia coli (strain K12), this protein is dITP/XTP pyrophosphatase.